We begin with the raw amino-acid sequence, 258 residues long: MLDSVASTLQLSELLSLTKAEQSIRLAEINVELEMLSAQERVAWALQNLEGAHAVSSSFGIQAAVMLHLLSKQQADIPVILTDTGYLFPETYQFIDELTKSLNLNLKVYRANESANWQEARYGKLWEQGIEGIEKYNKLNKVEPMRRALNELNVKTWFSGLRREQSQSRAGLPILSIQNGVFKFLPVVDWSNKDVHYYLKEHGLSYHPLWEQGYLSVGDTHTTQKWEPGMSEEETRFFGLKRECGLHEEDNEQDGSGI.

Cys244 serves as the catalytic Nucleophile; cysteine thiosulfonate intermediate.

This sequence belongs to the PAPS reductase family. CysH subfamily.

Its subcellular location is the cytoplasm. It carries out the reaction [thioredoxin]-disulfide + sulfite + adenosine 3',5'-bisphosphate + 2 H(+) = [thioredoxin]-dithiol + 3'-phosphoadenylyl sulfate. Its pathway is sulfur metabolism; hydrogen sulfide biosynthesis; sulfite from sulfate: step 3/3. Functionally, catalyzes the formation of sulfite from phosphoadenosine 5'-phosphosulfate (PAPS) using thioredoxin as an electron donor. This is Phosphoadenosine 5'-phosphosulfate reductase from Vibrio vulnificus (strain YJ016).